The sequence spans 549 residues: CTP synthase (549 aa).

The amidoligase domain stretch occupies residues 1–266; sequence MSAKYIFVTG…DKLALRYLHL (266 aa). S14 contacts CTP. S14 provides a ligand contact to UTP. ATP-binding positions include 15–20 and D72; that span reads SLGKGL. Positions 72 and 140 each coordinate Mg(2+). Residues 147-149, 187-192, and K223 contribute to the CTP site; these read DIE and KTKPTQ. UTP contacts are provided by residues 187-192 and K223; that span reads KTKPTQ. Residue 239-241 participates in ATP binding; that stretch reads KDV. The 243-residue stretch at 291 to 533 folds into the Glutamine amidotransferase type-1 domain; it reads SIGIVGKYVE…VKAAYQNHKP (243 aa). G353 provides a ligand contact to L-glutamine. The active-site Nucleophile; for glutamine hydrolysis is the C380. L-glutamine-binding positions include 381 to 384, E404, and R461; that span reads LGMQ. Active-site residues include H506 and E508.

The protein belongs to the CTP synthase family. Homotetramer.

The catalysed reaction is UTP + L-glutamine + ATP + H2O = CTP + L-glutamate + ADP + phosphate + 2 H(+). It catalyses the reaction L-glutamine + H2O = L-glutamate + NH4(+). The enzyme catalyses UTP + NH4(+) + ATP = CTP + ADP + phosphate + 2 H(+). It participates in pyrimidine metabolism; CTP biosynthesis via de novo pathway; CTP from UDP: step 2/2. Allosterically activated by GTP, when glutamine is the substrate; GTP has no effect on the reaction when ammonia is the substrate. The allosteric effector GTP functions by stabilizing the protein conformation that binds the tetrahedral intermediate(s) formed during glutamine hydrolysis. Inhibited by the product CTP, via allosteric rather than competitive inhibition. Catalyzes the ATP-dependent amination of UTP to CTP with either L-glutamine or ammonia as the source of nitrogen. Regulates intracellular CTP levels through interactions with the four ribonucleotide triphosphates. The protein is CTP synthase of Acidobacterium capsulatum (strain ATCC 51196 / DSM 11244 / BCRC 80197 / JCM 7670 / NBRC 15755 / NCIMB 13165 / 161).